We begin with the raw amino-acid sequence, 238 residues long: Adapter protein MecA (238 aa).

Positions glutamine 120–arginine 136 are enriched in basic and acidic residues. Residues glutamine 120–threonine 139 are disordered.

It belongs to the MecA family. Homodimer.

Functionally, enables the recognition and targeting of unfolded and aggregated proteins to the ClpC protease or to other proteins involved in proteolysis. This chain is Adapter protein MecA, found in Staphylococcus saprophyticus subsp. saprophyticus (strain ATCC 15305 / DSM 20229 / NCIMB 8711 / NCTC 7292 / S-41).